Reading from the N-terminus, the 437-residue chain is 3-phosphoshikimate 1-carboxyvinyltransferase (437 aa).

Positions 22, 23, and 27 each coordinate 3-phosphoshikimate. Lys22 serves as a coordination point for phosphoenolpyruvate. Residues Gly96 and Arg125 each contribute to the phosphoenolpyruvate site. Residues Ser170, Gln172, Asp323, and Lys350 each coordinate 3-phosphoshikimate. Gln172 serves as a coordination point for phosphoenolpyruvate. The active-site Proton acceptor is Asp323. Phosphoenolpyruvate-binding residues include Arg354 and Arg396.

The protein belongs to the EPSP synthase family. Monomer.

The protein resides in the cytoplasm. It carries out the reaction 3-phosphoshikimate + phosphoenolpyruvate = 5-O-(1-carboxyvinyl)-3-phosphoshikimate + phosphate. It participates in metabolic intermediate biosynthesis; chorismate biosynthesis; chorismate from D-erythrose 4-phosphate and phosphoenolpyruvate: step 6/7. Its function is as follows. Catalyzes the transfer of the enolpyruvyl moiety of phosphoenolpyruvate (PEP) to the 5-hydroxyl of shikimate-3-phosphate (S3P) to produce enolpyruvyl shikimate-3-phosphate and inorganic phosphate. This is 3-phosphoshikimate 1-carboxyvinyltransferase from Synechococcus sp. (strain RCC307).